Here is a 400-residue protein sequence, read N- to C-terminus: MTTKNLETKVTVTSSPIRGAGDGMETEEPPKSVEVTSGVQSRKHHSLQSPWKKAVPSESPGVLQLGKMLTEKAMEVKAVRILVPKAAITHDIPNKNTKVKSLGHHKGEFLGQSEGVIEPNKELSEVKNVLEKLKNSERRLLQDKEGLSNQLRVQTEVNRELKKLLVASVGDDLQYHFERLAREKNQLILENEALGRNTAQLSEQLERMSIQCDVWRSKFLASRVMADELTNSRAALQRQNRDAHGAIQDLLSEREQFRQEMIATQKLLEELLVSLQWGREQTYSPSVQPHSTAELALTNHKLAKAVNSHLLGNVGINNQKKIPSTVEFCSTPAEKMAETVLRILDPVTCKESSPDNPFFESSPTTLLATKKNIGRFHPYTRYENITFNCCNHCRGELIAL.

Polar residues predominate over residues 1 to 16 (MTTKNLETKVTVTSSP). The tract at residues 1–58 (MTTKNLETKVTVTSSPIRGAGDGMETEEPPKSVEVTSGVQSRKHHSLQSPWKKAVPSE) is disordered. Ser-15 is subject to Phosphoserine. The Tankyrase-binding motif signature appears at 18-22 (RGAGD). At Ser-49 the chain carries Phosphoserine. Residues 120–213 (NKELSEVKNV…QLERMSIQCD (94 aa)) are a coiled coil. Thr-348 carries the post-translational modification Phosphothreonine. The residue at position 353 (Ser-353) is a Phosphoserine. The segment at 394–400 (RGELIAL) is essential for interaction with GORASP2.

As to quaternary structure, interacts with GORASP2. Interacts with the GTP-bound form of RAB2, but not with other Golgi Rab proteins. Identified in a complex with RAB2 and GORASP2. ADP-ribosylated by tankyrase TNKS and TNKS2. Poly-ADP-ribosylated protein is recognized by RNF146, followed by ubiquitination. In terms of processing, ubiquitinated by RNF146 when poly-ADP-ribosylated, leading to its degradation. In terms of tissue distribution, detected in adrenal gland.

The protein resides in the golgi apparatus membrane. It localises to the nucleus. Its subcellular location is the cytoplasm. In terms of biological role, required for normal Golgi structure and for protein transport from the endoplasmic reticulum (ER) through the Golgi apparatus to the cell surface. The protein is Golgin-45 (BLZF1) of Homo sapiens (Human).